A 467-amino-acid chain; its full sequence is 3-isopropylmalate dehydratase large subunit (467 aa).

Cys348, Cys408, and Cys411 together coordinate [4Fe-4S] cluster. The tract at residues 417-445 (DQLTPGERSASTSNRNFEGRQGKGGRTHL) is disordered.

This sequence belongs to the aconitase/IPM isomerase family. LeuC type 1 subfamily. Heterodimer of LeuC and LeuD. Requires [4Fe-4S] cluster as cofactor.

The catalysed reaction is (2R,3S)-3-isopropylmalate = (2S)-2-isopropylmalate. Its pathway is amino-acid biosynthesis; L-leucine biosynthesis; L-leucine from 3-methyl-2-oxobutanoate: step 2/4. Catalyzes the isomerization between 2-isopropylmalate and 3-isopropylmalate, via the formation of 2-isopropylmaleate. This chain is 3-isopropylmalate dehydratase large subunit, found in Saccharopolyspora erythraea (strain ATCC 11635 / DSM 40517 / JCM 4748 / NBRC 13426 / NCIMB 8594 / NRRL 2338).